The following is a 391-amino-acid chain: Phosphoprotein (391 aa).

A phosphothreonine mark is found at Thr10 and Thr16. Positions 54–65 (QKNIQHPTASHQ) are enriched in polar residues. Disordered stretches follow at residues 54-97 (QKNI…PEPL) and 148-185 (PVTE…ERSG). Phosphoserine is present on Ser69. A phosphothreonine mark is found at Thr91, Thr150, and Thr165. Position 188 is a phosphoserine (Ser188). Residues 216 to 279 (ISANEIMDLL…MATVKIMDPG (64 aa)) form a multimerization region. Residues 218 to 245 (ANEIMDLLRGMDARLQHLEQKVDKVLAQ) are a coiled coil. The residue at position 250 (Thr250) is a Phosphothreonine. Ser257 carries the post-translational modification Phosphoserine. Thr258 and Thr282 each carry phosphothreonine. A phosphoserine mark is found at Ser292 and Ser294. Position 298 is a phosphothreonine (Thr298). A phosphoserine mark is found at Ser301 and Ser374. An interaction with the nucleoprotein region spans residues 343–391 (AGRKVMITKMITDCVANPQMKQAFEQRLAKASTEDALNDIKRDIIRSAI). Thr375 is subject to Phosphothreonine.

Belongs to the rubulavirus/avulavirus P protein family. As to quaternary structure, homotetramer. Interacts (via multimerization domain) with polymerase L; this interaction forms the polymerase L-P complex. Interacts (via N-terminus) with N0 (via Ncore); this interaction allows P to chaperon N0 to avoid N polymerization before encapsidation. Interacts (via C-terminus) with N-RNA template; this interaction positions the polymerase on the template for both transcription and replication. Interacts with host RPS6KB1 kinase; this interaction may play a role in the viral replication and transcription.

Essential cofactor of the RNA polymerase L that plays a central role in the transcription and replication by forming the polymerase complex with RNA polymerase L and recruiting L to the genomic N-RNA template for RNA synthesis. Also plays a central role in the encapsidation of nascent RNA chains by forming the encapsidation complex with the nucleocapsid protein N (N-P complex). Acts as a chaperone for newly synthesized free N protein, so-called N0, allowing encapsidation of nascent RNA chains during replication. The nucleoprotein protein N prevents excessive phosphorylation of P, which leads to down-regulation of viral transcription/ replication. Participates, together with N, in the formation of viral factories (viroplasms), which are large inclusions in the host cytoplasm where replication takes place. In Homo sapiens (Human), this protein is Phosphoprotein (P/V).